A 178-amino-acid polypeptide reads, in one-letter code: Protein FLOWERING LOCUS T 1 (178 aa).

Belongs to the phosphatidylethanolamine-binding protein family. Expressed in leaves but not in shoot apex.

Its function is as follows. Involved in the regulation of vernalization and of flowering time. This is Protein FLOWERING LOCUS T 1 from Brachypodium distachyon (Purple false brome).